A 164-amino-acid chain; its full sequence is Polygalacturonase (164 aa).

The protein belongs to the glycosyl hydrolase 28 family.

It is found in the secreted. It localises to the cell wall. The catalysed reaction is (1,4-alpha-D-galacturonosyl)n+m + H2O = (1,4-alpha-D-galacturonosyl)n + (1,4-alpha-D-galacturonosyl)m.. This Cupressus sempervirens (Italian cypress) protein is Polygalacturonase.